A 421-amino-acid polypeptide reads, in one-letter code: Serine--tRNA ligase (421 aa).

Residue 231–233 (TGE) coordinates L-serine. 262-264 (RRE) contacts ATP. L-serine is bound at residue Glu285. Position 349 to 352 (349 to 352 (EVSS)) interacts with ATP. An L-serine-binding site is contributed by Ser384.

The protein belongs to the class-II aminoacyl-tRNA synthetase family. Type-1 seryl-tRNA synthetase subfamily. In terms of assembly, homodimer. The tRNA molecule binds across the dimer.

Its subcellular location is the cytoplasm. The enzyme catalyses tRNA(Ser) + L-serine + ATP = L-seryl-tRNA(Ser) + AMP + diphosphate + H(+). It carries out the reaction tRNA(Sec) + L-serine + ATP = L-seryl-tRNA(Sec) + AMP + diphosphate + H(+). It participates in aminoacyl-tRNA biosynthesis; selenocysteinyl-tRNA(Sec) biosynthesis; L-seryl-tRNA(Sec) from L-serine and tRNA(Sec): step 1/1. Catalyzes the attachment of serine to tRNA(Ser). Is also able to aminoacylate tRNA(Sec) with serine, to form the misacylated tRNA L-seryl-tRNA(Sec), which will be further converted into selenocysteinyl-tRNA(Sec). The polypeptide is Serine--tRNA ligase (Methylacidiphilum infernorum (isolate V4) (Methylokorus infernorum (strain V4))).